A 264-amino-acid chain; its full sequence is MRTYLDLLQHVLDNGTDRGDRTGTGTRSVFGYQMRFNLEEGFPVLTTKKLHLRSIIHELLWFLKGDTNIAYLKENGVSIWDEWADKNGDLGPVYGYQWRSWPAPDGRHIDQIANLLKMLHGNPNSRRLIVSAWNPALVDEMALPPCHCLFQFYVADGKLSCQLYQRSADIFLGVPFNIASYALLTMMIAQVAGLKPGEFIHTLGDAHIYANHFDQARLQLTRIPKKLPTMWINPDVKDLFAFRFEDFQLEGYEADPTIKAPIAV.

Arg-21 serves as a coordination point for dUMP. Position 51 (His-51) interacts with (6R)-5,10-methylene-5,6,7,8-tetrahydrofolate. 126–127 (RR) lines the dUMP pocket. Cys-146 functions as the Nucleophile in the catalytic mechanism. Residues 166–169 (RSAD), Asn-177, and 207–209 (HIY) each bind dUMP. Asp-169 lines the (6R)-5,10-methylene-5,6,7,8-tetrahydrofolate pocket. Ala-263 provides a ligand contact to (6R)-5,10-methylene-5,6,7,8-tetrahydrofolate.

The protein belongs to the thymidylate synthase family. Bacterial-type ThyA subfamily. In terms of assembly, homodimer.

It is found in the cytoplasm. It catalyses the reaction dUMP + (6R)-5,10-methylene-5,6,7,8-tetrahydrofolate = 7,8-dihydrofolate + dTMP. The protein operates within pyrimidine metabolism; dTTP biosynthesis. Functionally, catalyzes the reductive methylation of 2'-deoxyuridine-5'-monophosphate (dUMP) to 2'-deoxythymidine-5'-monophosphate (dTMP) while utilizing 5,10-methylenetetrahydrofolate (mTHF) as the methyl donor and reductant in the reaction, yielding dihydrofolate (DHF) as a by-product. This enzymatic reaction provides an intracellular de novo source of dTMP, an essential precursor for DNA biosynthesis. The protein is Thymidylate synthase of Brucella anthropi (strain ATCC 49188 / DSM 6882 / CCUG 24695 / JCM 21032 / LMG 3331 / NBRC 15819 / NCTC 12168 / Alc 37) (Ochrobactrum anthropi).